The primary structure comprises 124 residues: Small ribosomal subunit protein eS8 (124 aa).

Residues 1–22 (MQYQGRSKRSKTGARLRPRSKK) are compositionally biased toward basic residues. Disordered regions lie at residues 1 to 40 (MQYQ…GEPR) and 102 to 124 (AGTA…RVDE). Over residues 23-32 (SKSELGREPT) the composition is skewed to basic and acidic residues. The span at 106 to 124 (RVTSRPGQDGQVNATRVDE) shows a compositional bias: polar residues.

Belongs to the eukaryotic ribosomal protein eS8 family. In terms of assembly, part of the 30S ribosomal subunit.

The protein is Small ribosomal subunit protein eS8 of Halobacterium salinarum (strain ATCC 29341 / DSM 671 / R1).